We begin with the raw amino-acid sequence, 190 residues long: Probable RNA-binding protein 18 (190 aa).

In terms of domain architecture, RRM spans 25–106; it reads HRLWIGNVDP…KKLVVRWAHA (82 aa).

The chain is Probable RNA-binding protein 18 (rbm18) from Xenopus laevis (African clawed frog).